We begin with the raw amino-acid sequence, 190 residues long: dTTP/UTP pyrophosphatase (190 aa).

Asp-70 (proton acceptor) is an active-site residue.

It belongs to the Maf family. YhdE subfamily. The cofactor is a divalent metal cation.

Its subcellular location is the cytoplasm. It carries out the reaction dTTP + H2O = dTMP + diphosphate + H(+). It catalyses the reaction UTP + H2O = UMP + diphosphate + H(+). Functionally, nucleoside triphosphate pyrophosphatase that hydrolyzes dTTP and UTP. May have a dual role in cell division arrest and in preventing the incorporation of modified nucleotides into cellular nucleic acids. The polypeptide is dTTP/UTP pyrophosphatase (Paramagnetospirillum magneticum (strain ATCC 700264 / AMB-1) (Magnetospirillum magneticum)).